A 152-amino-acid chain; its full sequence is D-aminoacyl-tRNA deacylase (152 aa).

The Gly-cisPro motif, important for rejection of L-amino acids signature appears at 137 to 138; the sequence is GP.

This sequence belongs to the DTD family. As to quaternary structure, homodimer.

It localises to the cytoplasm. The catalysed reaction is glycyl-tRNA(Ala) + H2O = tRNA(Ala) + glycine + H(+). It carries out the reaction a D-aminoacyl-tRNA + H2O = a tRNA + a D-alpha-amino acid + H(+). Functionally, an aminoacyl-tRNA editing enzyme that deacylates mischarged D-aminoacyl-tRNAs. Also deacylates mischarged glycyl-tRNA(Ala), protecting cells against glycine mischarging by AlaRS. Acts via tRNA-based rather than protein-based catalysis; rejects L-amino acids rather than detecting D-amino acids in the active site. By recycling D-aminoacyl-tRNA to D-amino acids and free tRNA molecules, this enzyme counteracts the toxicity associated with the formation of D-aminoacyl-tRNA entities in vivo and helps enforce protein L-homochirality. This is D-aminoacyl-tRNA deacylase from Thermus aquaticus.